The primary structure comprises 78 residues: Probable [Fe-S]-dependent transcriptional repressor (78 aa).

Cys56, Cys61, Cys64, and Cys70 together coordinate iron-sulfur cluster.

It belongs to the FeoC family.

In terms of biological role, may function as a transcriptional regulator that controls feoABC expression. This is Probable [Fe-S]-dependent transcriptional repressor from Citrobacter koseri (strain ATCC BAA-895 / CDC 4225-83 / SGSC4696).